The chain runs to 107 residues: Iron-binding protein IscA (107 aa).

Fe cation is bound by residues C35, C99, and C101.

It belongs to the HesB/IscA family. Homodimer; may form tetramers and higher multimers. Fe cation serves as cofactor.

In terms of biological role, is able to transfer iron-sulfur clusters to apo-ferredoxin. Multiple cycles of [2Fe2S] cluster formation and transfer are observed, suggesting that IscA acts catalytically. Recruits intracellular free iron so as to provide iron for the assembly of transient iron-sulfur cluster in IscU in the presence of IscS, L-cysteine and the thioredoxin reductase system TrxA/TrxB. In Photorhabdus laumondii subsp. laumondii (strain DSM 15139 / CIP 105565 / TT01) (Photorhabdus luminescens subsp. laumondii), this protein is Iron-binding protein IscA.